The sequence spans 1195 residues: DNA-directed RNA polymerase subunit Rpo2 (1195 aa).

Over residues 894–909 (LEEGEERLGPQRRRES) the composition is skewed to basic and acidic residues. The segment at 894–914 (LEEGEERLGPQRRRESSVTMR) is disordered. The Zn(2+) site is built by cysteine 1135, cysteine 1140, cysteine 1155, and cysteine 1158.

This sequence belongs to the RNA polymerase beta chain family. Part of the RNA polymerase complex. It depends on Zn(2+) as a cofactor.

Its subcellular location is the cytoplasm. It carries out the reaction RNA(n) + a ribonucleoside 5'-triphosphate = RNA(n+1) + diphosphate. DNA-dependent RNA polymerase (RNAP) catalyzes the transcription of DNA into RNA using the four ribonucleoside triphosphates as substrates. This subunit is involved in DNA promoter recognition. This chain is DNA-directed RNA polymerase subunit Rpo2, found in Thermoplasma acidophilum (strain ATCC 25905 / DSM 1728 / JCM 9062 / NBRC 15155 / AMRC-C165).